Consider the following 418-residue polypeptide: EPS I polysaccharide export inner membrane protein EpsF (418 aa).

Helical transmembrane passes span 21–41 (VLVV…LPII), 45–65 (CAAI…LATA), 142–162 (PLLV…IAIY), 170–190 (YVVF…GSAI), 222–242 (AGTH…VLFL), 262–282 (LIVL…EFVM), 296–316 (SAWE…AWLL), 326–346 (MAFL…PAVG), 347–367 (ARLF…FFFA), and 377–397 (KTLA…IVSA).

The protein to S.marcescens SfuB.

It localises to the cell inner membrane. Probably involved in polymerization and/or export of exopolysaccharide EPS I which functions as a virulence factor. May play a role in export of EPS I or its intermediates across the membranes. The protein is EPS I polysaccharide export inner membrane protein EpsF (epsF) of Ralstonia nicotianae (strain ATCC BAA-1114 / GMI1000) (Ralstonia solanacearum).